A 641-amino-acid chain; its full sequence is 1,3-beta-glucanosyltransferase PGA5 (641 aa).

An N-terminal signal peptide occupies residues 1–23 (MTTLSTIWLFLITITAIFQLGLS). A glycan (N-linked (GlcNAc...) asparagine) is linked at Asn-25. Cys-106 and Cys-135 are joined by a disulfide. Tyr-124, Asn-192, Glu-193, Asp-234, and Arg-239 together coordinate (1,3-beta-D-glucosyl)n. The active-site Proton donor is Glu-193. Cystine bridges form between Cys-248–Cys-390, Cys-276–Cys-307, Cys-424–Cys-474, Cys-426–Cys-528, Cys-433–Cys-498, and Cys-451–Cys-456. Catalysis depends on Glu-304, which acts as the Nucleophile. Tyr-336 is a (1,3-beta-D-glucosyl)n binding site. Residues 535–613 (KEEEKEVQEE…SPKTSKSIAG (79 aa)) form a disordered region. A compositionally biased stretch (basic and acidic residues) spans 571–581 (KSKEKEKGKLI). Residues 582–593 (EEEEEEEEEEEE) show a composition bias toward acidic residues. Residues 596–610 (KTPSSGEKSPKTSKS) show a composition bias toward polar residues. N-linked (GlcNAc...) asparagine glycosylation is present at Asn-621. The GPI-anchor amidated aspartate moiety is linked to residue Asp-622. The propeptide at 623-641 (SIWKTFIEILFTCSAAILI) is removed in mature form.

The protein belongs to the glycosyl hydrolase 72 family.

It localises to the cell membrane. Functionally, splits internally a 1,3-beta-glucan molecule and transfers the newly generated reducing end (the donor) to the non-reducing end of another 1,3-beta-glucan molecule (the acceptor) forming a 1,3-beta linkage, resulting in the elongation of 1,3-beta-glucan chains in the cell wall. Involved in spore wall assembly. The polypeptide is 1,3-beta-glucanosyltransferase PGA5 (PGA5) (Candida albicans (strain SC5314 / ATCC MYA-2876) (Yeast)).